A 1154-amino-acid polypeptide reads, in one-letter code: Paired amphipathic helix protein pst3 (1154 aa).

Disordered stretches follow at residues 1–71 (MDVM…RSVT) and 91–110 (SGKDGSISSQNAEGLSSSSN). Residues 9–27 (DSERDNPGDKVETQSDKNH) show a composition bias toward basic and acidic residues. 2 stretches are compositionally biased toward polar residues: residues 32 to 45 (SPSQSQSPVNTSLH) and 100 to 110 (QNAEGLSSSSN). One can recognise a PAH 1 domain in the interval 111–181 (RPLDVNDALS…EGFNTFLPSG (71 aa)). Disordered stretches follow at residues 199-249 (GTPM…STEN) and 321-376 (DNVD…KTSR). A compositionally biased stretch (low complexity) spans 228–241 (STSPTDSQPQPSAP). Positions 252-322 (PRVDFNYAIA…EEFKLFLPDN (71 aa)) constitute a PAH 2 domain. Composition is skewed to polar residues over residues 323-337 (VDSTEPSTPNVQKSP) and 365-376 (AQISRSISKTSR). A PAH 3 domain is found at 403 to 472 (SPYAATQEEL…LWFSEFIRWS (70 aa)). A disordered region spans residues 797 to 824 (NSNNTNVSFQTDETQTEDETMSDIHPDD).

The protein resides in the nucleus. The polypeptide is Paired amphipathic helix protein pst3 (pst3) (Schizosaccharomyces pombe (strain 972 / ATCC 24843) (Fission yeast)).